The following is an 854-amino-acid chain: Iron and copper transporter IacT (854 aa).

Positions 187–194 match the TonB box motif; it reads IELIVTAQ. The TBDR plug domain occupies 199 to 315; that stretch reads DAQDVPLSLT…PAGVVNVISR (117 aa). A TBDR beta-barrel domain is found at 320–854; it reads QPEMRISALY…TYGVRVSASF (535 aa). Residues 839–854 carry the TonB C-terminal box motif; sequence GFGDPVTYGVRVSASF.

Belongs to the TonB-dependent receptor family.

It localises to the cell outer membrane. In terms of biological role, involved in the TonB-dependent uptake of copper and iron under conditions in which the concentration of copper exceeds that of the iron. In Nostoc sp. (strain PCC 7120 / SAG 25.82 / UTEX 2576), this protein is Iron and copper transporter IacT.